Consider the following 277-residue polypeptide: MAIVKMKPTSAGRRGMVRVVTEGLHKGAPYAPLLEKKNSTAGRNNNGHITTRHKGGGHKHHYRVVDFKRNKDGIPAKVERIEYDPNRTAFIALLCYADGERRYIIAPRGIQAGAVLVSGAEAAIKVGNTLPIRNIPVGTTIHCIEMKPGKGAQIARSAGASAVLLAKEGAYAQVRLRSGEVRKINVNCRATIGEVGNEEQSLKKIGKAGANRWRGIRPTVRGVVMNPVDHPHGGGEGRTGEAREPVSPWGTPAKGYRTRNNKRTDNMIVRRRYSNKG.

2 disordered regions span residues 37 to 60 (KNST…GHKH) and 223 to 265 (VVMN…KRTD). The span at 39 to 49 (STAGRNNNGHI) shows a compositional bias: polar residues. The segment covering 50–60 (TTRHKGGGHKH) has biased composition (basic residues). The span at 229-244 (DHPHGGGEGRTGEARE) shows a compositional bias: basic and acidic residues.

This sequence belongs to the universal ribosomal protein uL2 family. In terms of assembly, part of the 50S ribosomal subunit. Forms a bridge to the 30S subunit in the 70S ribosome.

In terms of biological role, one of the primary rRNA binding proteins. Required for association of the 30S and 50S subunits to form the 70S ribosome, for tRNA binding and peptide bond formation. It has been suggested to have peptidyltransferase activity; this is somewhat controversial. Makes several contacts with the 16S rRNA in the 70S ribosome. This is Large ribosomal subunit protein uL2 from Neisseria meningitidis serogroup A / serotype 4A (strain DSM 15465 / Z2491).